The following is a 265-amino-acid chain: Arcelin-2 (265 aa).

The first 21 residues, 1–21 (MASSNLLTLALFLVLLTHANS), serve as a signal peptide directing secretion. Residues Asn-33 and Asn-89 are each glycosylated (N-linked (GlcNAc...) asparagine). A disulfide bridge links Cys-165 with Cys-201.

It belongs to the leguminous lectin family.

Seed storage. This carbohydrate-binding lectin has toxic effects on bean bruchid pests. Antibiosis properties of legume lectins are proposed to be due to the lysis of epithelial cells of the intestine by binding to the carbohydrate moieties of these proteins. The protein is Arcelin-2 (ARC2) of Phaseolus vulgaris (Kidney bean).